A 991-amino-acid polypeptide reads, in one-letter code: Polyribonucleotide nucleotidyltransferase 2, mitochondrial (991 aa).

A mitochondrion-targeting transit peptide spans 1-39; that stretch reads MSSIVNRASSASLPNFLAWRALGFRTICSGRLGFAPSVP. In terms of domain architecture, KH spans 609 to 667; the sequence is PRLATLKYSNDSLRTLIGPMGVLKRKIEVETGARLSIDNGTLTIVAKNQDVMEKAQEQV. One can recognise an S1 motif 1 domain in the interval 678-746; that stretch reads GGVYKGTVSS…VRGNIKLSRK (69 aa). The tract at residues 813–865 is disordered; sequence EAEKSSPVNDNDKPRRAATSKPDRKPKSTASKLIATQKEEEALESIAPEETSA. Residues 822-838 are compositionally biased toward basic and acidic residues; that stretch reads DNDKPRRAATSKPDRKP. In terms of domain architecture, S1 motif 2 spans 925-987; sequence GTEMTATVDH…GVPVMALVDE (63 aa).

It belongs to the polyribonucleotide nucleotidyltransferase family.

It localises to the mitochondrion. It catalyses the reaction RNA(n+1) + phosphate = RNA(n) + a ribonucleoside 5'-diphosphate. Its function is as follows. Involved in the 3'-end maturation of mitochondrial mRNAs, rRNAs and tRNAs. Functions as a poly(A) mRNA 3'-5' degrading phosphorylase and is required for the degradation of highly expressed transcripts of non-coding regions. In Arabidopsis thaliana (Mouse-ear cress), this protein is Polyribonucleotide nucleotidyltransferase 2, mitochondrial (PNP2).